Consider the following 294-residue polypeptide: Endonuclease G, mitochondrial (294 aa).

The transit peptide at 1–44 (MRALRAGLTLALGAGLGAAAEHWRRREGKAPGLLGRVPLLPVVA) directs the protein to the mitochondrion. Thr-125 is subject to Phosphothreonine. His-138 functions as the Proton acceptor in the catalytic mechanism. Asn-169 provides a ligand contact to Mg(2+). An essential for deoxyribonuclease activity region spans residues 283–293 (AGNLKAITAGS).

It belongs to the DNA/RNA non-specific endonuclease family. In terms of assembly, homodimer; disulfide-linked. Homodimerization is essential for its activity. Interacts with YWHAG. It depends on Mg(2+) as a cofactor. In terms of processing, GSK3-beta-mediated phosphorylation at Thr-125 is necessary for its interaction with YWHAG and the induction of autophagy.

The protein resides in the mitochondrion. Its function is as follows. Endonuclease that preferentially catalyzes the cleavage of double-stranded 5-hydroxymethylcytosine (5hmC)-modified DNA. The 5hmC-modified nucleotide does not increase the binding affinity, but instead increases the efficiency of cutting and specifies the site of cleavage for the modified DNAs. Shows significantly higher affinity for four-stranded Holliday junction over duplex and single-stranded DNAs. Promotes conservative recombination when the DNA is 5hmC-modified. Promotes autophagy through the suppression of mTOR by its phosphorylation-mediated interaction with YWHAG and its endonuclease activity-mediated DNA damage response. GSK3-beta mediated phosphorylation of ENDOG enhances its interaction with YWHAG, leading to the release of TSC2 and PIK3C3 from YWHAG resulting in mTOR pathway suppression and autophagy initiation. Promotes cleavage of mtDNA in response to oxidative and nitrosative stress, in turn inducing compensatory mtDNA replication. The sequence is that of Endonuclease G, mitochondrial (Endog) from Mus musculus (Mouse).